The following is a 486-amino-acid chain: Cytochrome P450 monooxygenase aclC (486 aa).

Residue Cys-427 participates in heme binding.

The protein belongs to the cytochrome P450 family. Heme is required as a cofactor.

It participates in mycotoxin biosynthesis. Its function is as follows. Cytochrome P450 monooxygenase; part of the gene cluster that mediates the biosynthesis of aspirochlorine (or antibiotic A30641), an unusual halogenated spiro compound with distinctive antifungal properties due to selective inhibition of protein biosynthesis, and which is also active against bacteria, viruses, and murine tumor cells. The non-ribosomal peptide synthetase (NRPS) aclP is responsible the formation of the diketopiperazine (DKP) core from the condensation of 2 phenylalanine residues. One Phe residue is tailored into chlorotyrosine by hydroxylation and chlorination, whereas the second Phe undergoes an unprecedented C-C bond cleavage to be converted into glycine. After formation of the DKP, sulfur is incorporated into the DKP by conjugation with glutathione by aclG, followed by its stepwise degradation to the thiol by aclI, aclJ and aclK, and the dithiol oxidation by aclT. In addition, oxygenases (aclB, aclC, aclL and aclO) and O-methyltransferases (aclM and aclU) act as tailoring enzymes to produce the intermediate dechloroaspirochlorine. Ultimately, chlorination of dechloroaspirochlorine by the halogenase aclH is the last step in the aspirochlorine pathway. This is Cytochrome P450 monooxygenase aclC from Aspergillus oryzae (strain ATCC 42149 / RIB 40) (Yellow koji mold).